Consider the following 338-residue polypeptide: Cinnamoyl-CoA reductase 1 (338 aa).

NADP(+)-binding positions include 22 to 28 (GAGGFIG), Arg47, Lys53, 73 to 74 (DV), 93 to 95 (VAS), Tyr165, Lys169, 192 to 195 (PSMT), and Ser207. Cysteines 158 and 166 form a disulfide. Lys169 serves as the catalytic Proton donor.

It belongs to the NAD(P)-dependent epimerase/dehydratase family. Dihydroflavonol-4-reductase subfamily. As to quaternary structure, interacts with RAC1 in a GTP-dependent manner.

Its subcellular location is the cytoplasm. It carries out the reaction (E)-cinnamaldehyde + NADP(+) + CoA = (E)-cinnamoyl-CoA + NADPH + H(+). The protein operates within aromatic compound metabolism; phenylpropanoid biosynthesis. Its activity is regulated as follows. Activated by the small GTPase RAC1. Its function is as follows. Involved in the latter stages of lignin biosynthesis. Catalyzes one of the last steps of monolignol biosynthesis, the conversion of cinnamoyl-CoAs into their corresponding cinnamaldehydes. Probably involved in the formation of lignin in defense responses. This chain is Cinnamoyl-CoA reductase 1, found in Oryza sativa subsp. japonica (Rice).